A 554-amino-acid chain; its full sequence is MVKISLDNTALYADIDTTPQFEPSKTTVADILTKDALEFIVLLHRTFNSTRKQLLANRSNLQSKLDSGEYRFDFLPETEQIRNDPTWQGAIPAPGLINRSSEITGPPLRNMLVNALNAEVTTYMTDFEDSSSPTWENMIYGQVNLYDAIRNQIDFKTPRKEYRLKDDISRLPTLIVRPRGWHMVEKHLYIDDEPISASIFDFGLYFYHNAKELVKIGKGPYFYLPKMEHHMEVKLWNDIFCVAQDFIGMPRGTIRATVLIETLPAAFQMEEIIYQIREHSSGLNCGRWDYIFSTIKKLRNLPEHVLPNRDLVTMTSPFMDAYVKRLINTCHRRGVHAMGGMAAQIPIKDDPKANEAAMNKVRNDKIREMKNGHDGSWVAHPALAPICNEVFSNMGTANQIYFVPDVHVTSSDLLNTKIQDAQVTTEGIRVNLDIGLQYMEAWLRGSGCVPINHLMEDAATAEVSRCQLYQWVKHGVVLSDTGDKVTPELTAKILNEETAKLASASPLGEKNKFALAAKYFLPEVTGKIFSDFLTTLLYDEIIKPSAKPVDLSKL.

The Proton acceptor role is filled by R177. D457 functions as the Proton donor in the catalytic mechanism. The short motif at 552–554 is the SKL peroxisome targeting motif element; sequence SKL.

It belongs to the malate synthase family. In terms of assembly, interacts with PEX9.

The protein localises to the peroxisome matrix. The enzyme catalyses glyoxylate + acetyl-CoA + H2O = (S)-malate + CoA + H(+). In terms of biological role, allantoin metabolism-specific malate synthase involved in the recycling the glyoxylate generated during allantoin degradation by the ureidoglycollate (UG) hydrolase reaction. The sequence is that of Malate synthase 2 from Saccharomyces cerevisiae (strain ATCC 204508 / S288c) (Baker's yeast).